The sequence spans 453 residues: Protein amnionless (453 aa).

An N-terminal signal peptide occupies residues 1–19; sequence MGVLGRVLLWLQLCALTQA. The Extracellular segment spans residues 20–357; sequence VSKLWVPNTD…ESGAHVWGSS (338 aa). A glycan (N-linked (GlcNAc...) asparagine) is linked at Asn-35. Intrachain disulfides connect Cys-43/Cys-96, Cys-137/Cys-213, Cys-205/Cys-211, Cys-223/Cys-249, Cys-234/Cys-250, and Cys-239/Cys-253. Residues 67–87 form an interaction with CUBN region; the sequence is SDMLLPLDGELVLASGAGFGV. The region spanning 202 to 254 is the VWFC domain; the sequence is PEDCADPSGCVCGNAEAQPWICAALLQPLGGRCPQAACHSALRPQGQCCDLCG. The chain crosses the membrane as a helical span at residues 358-378; sequence AAGLAGGVAAAVLLALLVLLV. Residues 379–453 lie on the Cytoplasmic side of the membrane; it reads APPLLRRAGR…PLFAGAEAEA (75 aa).

Interacts (via extracellular region) with CUBN/cubilin, giving rise to a huge complex containing one AMN chain and three CUBN chains. N-glycosylated. Post-translationally, a soluble form arises by proteolytic removal of the membrane anchor. As to expression, detected in proximal tubules in the kidney cortex (at protein level). Long isoforms are highly expressed in small intestine, colon and kidney (renal proximal tubule epithelial cells). Shorter isoforms are detected at lower levels in testis, thymus and peripheral blood leukocytes.

It is found in the apical cell membrane. The protein localises to the cell membrane. The protein resides in the endosome membrane. Its subcellular location is the membrane. It localises to the coated pit. It is found in the secreted. In terms of biological role, membrane-bound component of the endocytic receptor formed by AMN and CUBN. Required for normal CUBN glycosylation and trafficking to the cell surface. The complex formed by AMN and CUBN is required for efficient absorption of vitamin B12. Required for normal CUBN-mediated protein transport in the kidney. This is Protein amnionless (AMN) from Homo sapiens (Human).